The sequence spans 351 residues: Histidinol-phosphate aminotransferase (351 aa).

Lys-221 carries the N6-(pyridoxal phosphate)lysine modification.

It belongs to the class-II pyridoxal-phosphate-dependent aminotransferase family. Histidinol-phosphate aminotransferase subfamily. In terms of assembly, homodimer. It depends on pyridoxal 5'-phosphate as a cofactor.

The catalysed reaction is L-histidinol phosphate + 2-oxoglutarate = 3-(imidazol-4-yl)-2-oxopropyl phosphate + L-glutamate. It functions in the pathway amino-acid biosynthesis; L-histidine biosynthesis; L-histidine from 5-phospho-alpha-D-ribose 1-diphosphate: step 7/9. The chain is Histidinol-phosphate aminotransferase from Staphylococcus saprophyticus subsp. saprophyticus (strain ATCC 15305 / DSM 20229 / NCIMB 8711 / NCTC 7292 / S-41).